Reading from the N-terminus, the 637-residue chain is Phosphomethylpyrimidine synthase (637 aa).

Residues Asn-242, Met-271, Tyr-300, His-336, 356 to 358 (SRG), 397 to 400 (DGLR), and Glu-436 contribute to the substrate site. His-440 contacts Zn(2+). Tyr-463 provides a ligand contact to substrate. His-504 is a Zn(2+) binding site. Residues Cys-584, Cys-587, and Cys-592 each coordinate [4Fe-4S] cluster.

It belongs to the ThiC family. As to quaternary structure, homodimer. It depends on [4Fe-4S] cluster as a cofactor.

The enzyme catalyses 5-amino-1-(5-phospho-beta-D-ribosyl)imidazole + S-adenosyl-L-methionine = 4-amino-2-methyl-5-(phosphooxymethyl)pyrimidine + CO + 5'-deoxyadenosine + formate + L-methionine + 3 H(+). The protein operates within cofactor biosynthesis; thiamine diphosphate biosynthesis. Catalyzes the synthesis of the hydroxymethylpyrimidine phosphate (HMP-P) moiety of thiamine from aminoimidazole ribotide (AIR) in a radical S-adenosyl-L-methionine (SAM)-dependent reaction. This is Phosphomethylpyrimidine synthase from Bordetella pertussis (strain Tohama I / ATCC BAA-589 / NCTC 13251).